Reading from the N-terminus, the 361-residue chain is Peptide chain release factor 1 (361 aa).

An N5-methylglutamine modification is found at Gln237. Residues 286 to 306 (AKQDQEQAAKRKSLVGSGDRS) are disordered.

The protein belongs to the prokaryotic/mitochondrial release factor family. Post-translationally, methylated by PrmC. Methylation increases the termination efficiency of RF1.

It localises to the cytoplasm. Functionally, peptide chain release factor 1 directs the termination of translation in response to the peptide chain termination codons UAG and UAA. The sequence is that of Peptide chain release factor 1 from Coxiella burnetii (strain CbuK_Q154) (Coxiella burnetii (strain Q154)).